A 493-amino-acid polypeptide reads, in one-letter code: Glycerol kinase 2 (493 aa).

Serine 12 provides a ligand contact to ADP. 2 residues coordinate ATP: serine 12 and threonine 13. Serine 12 lines the sn-glycerol 3-phosphate pocket. Residue lysine 16 participates in ADP binding. Residues arginine 82, glutamate 83, tyrosine 134, and aspartate 243 each contribute to the sn-glycerol 3-phosphate site. Residues arginine 82, glutamate 83, tyrosine 134, aspartate 243, and glutamine 244 each contribute to the glycerol site. ADP is bound by residues threonine 265 and glycine 308. 3 residues coordinate ATP: threonine 265, glycine 308, and asparagine 312. Asparagine 413 contacts ADP.

It belongs to the FGGY kinase family. Homotetramer and homodimer (in equilibrium).

The enzyme catalyses glycerol + ATP = sn-glycerol 3-phosphate + ADP + H(+). It participates in polyol metabolism; glycerol degradation via glycerol kinase pathway; sn-glycerol 3-phosphate from glycerol: step 1/1. With respect to regulation, activated by phosphorylation and inhibited by fructose 1,6-bisphosphate (FBP). Its function is as follows. Key enzyme in the regulation of glycerol uptake and metabolism. Catalyzes the phosphorylation of glycerol to yield sn-glycerol 3-phosphate. This is Glycerol kinase 2 from Clostridium tetani (strain Massachusetts / E88).